The chain runs to 507 residues: Chromosomal replication initiator protein DnaA (507 aa).

The interval 1-87 (MSVELWQQCV…IGSKRSSAPR (87 aa)) is domain I, interacts with DnaA modulators. Low complexity predominate over residues 85–110 (APRAAPNAPLAAAQVSQAQANAAPAS). The interval 85 to 158 (APRAAPNAPL…QQAPVRAEQR (74 aa)) is disordered. Positions 87 to 170 (RAAPNAPLAA…QVEGALKHTS (84 aa)) are domain II. The span at 126–140 (QKTEEISEEPSRDSF) shows a compositional bias: basic and acidic residues. The interval 171 to 387 (YLNRTFTFEN…GALKRVIAHS (217 aa)) is domain III, AAA+ region. ATP is bound by residues Gly215, Gly217, Lys218, and Thr219. Residues 388–507 (HFMGRDITIE…YKNLLRTLTT (120 aa)) are domain IV, binds dsDNA.

This sequence belongs to the DnaA family. In terms of assembly, oligomerizes as a right-handed, spiral filament on DNA at oriC.

The protein localises to the cytoplasm. Functionally, plays an essential role in the initiation and regulation of chromosomal replication. ATP-DnaA binds to the origin of replication (oriC) to initiate formation of the DNA replication initiation complex once per cell cycle. Binds the DnaA box (a 9 base pair repeat at the origin) and separates the double-stranded (ds)DNA. Forms a right-handed helical filament on oriC DNA; dsDNA binds to the exterior of the filament while single-stranded (ss)DNA is stabiized in the filament's interior. The ATP-DnaA-oriC complex binds and stabilizes one strand of the AT-rich DNA unwinding element (DUE), permitting loading of DNA polymerase. After initiation quickly degrades to an ADP-DnaA complex that is not apt for DNA replication. Binds acidic phospholipids. The chain is Chromosomal replication initiator protein DnaA from Pseudomonas fluorescens (strain Pf0-1).